Consider the following 321-residue polypeptide: Phospho-N-acetylmuramoyl-pentapeptide-transferase (321 aa).

10 consecutive transmembrane segments (helical) span residues 1-21 (MIFV…PVLI), 50-70 (MGGL…IIFV), 76-96 (IILL…DDYI), 112-132 (FLAQ…FHLV), 140-160 (IPFT…IVFL), 176-196 (GLAT…SFVL), 200-220 (AIGI…PYNI), 225-245 (VFMG…ISIM), 250-270 (LSLI…MLQV), and 300-320 (VVTV…WIGV).

The protein belongs to the glycosyltransferase 4 family. MraY subfamily. Mg(2+) is required as a cofactor.

It is found in the cell membrane. The catalysed reaction is UDP-N-acetyl-alpha-D-muramoyl-L-alanyl-gamma-D-glutamyl-L-lysyl-D-alanyl-D-alanine + di-trans,octa-cis-undecaprenyl phosphate = Mur2Ac(oyl-L-Ala-gamma-D-Glu-L-Lys-D-Ala-D-Ala)-di-trans,octa-cis-undecaprenyl diphosphate + UMP. Its pathway is cell wall biogenesis; peptidoglycan biosynthesis. Functionally, catalyzes the initial step of the lipid cycle reactions in the biosynthesis of the cell wall peptidoglycan: transfers peptidoglycan precursor phospho-MurNAc-pentapeptide from UDP-MurNAc-pentapeptide onto the lipid carrier undecaprenyl phosphate, yielding undecaprenyl-pyrophosphoryl-MurNAc-pentapeptide, known as lipid I. The protein is Phospho-N-acetylmuramoyl-pentapeptide-transferase of Staphylococcus aureus (strain bovine RF122 / ET3-1).